Consider the following 287-residue polypeptide: Pantothenate synthetase (287 aa).

Residue 30–37 (MGNLHSGH) participates in ATP binding. His37 (proton donor) is an active-site residue. (R)-pantoate is bound at residue Gln61. Gln61 provides a ligand contact to beta-alanine. ATP is bound at residue 149-152 (GEKD). A (R)-pantoate-binding site is contributed by Gln155. ATP contacts are provided by residues Val178 and 186–189 (LSSR).

It belongs to the pantothenate synthetase family. As to quaternary structure, homodimer.

It is found in the cytoplasm. The catalysed reaction is (R)-pantoate + beta-alanine + ATP = (R)-pantothenate + AMP + diphosphate + H(+). It participates in cofactor biosynthesis; (R)-pantothenate biosynthesis; (R)-pantothenate from (R)-pantoate and beta-alanine: step 1/1. Its function is as follows. Catalyzes the condensation of pantoate with beta-alanine in an ATP-dependent reaction via a pantoyl-adenylate intermediate. The chain is Pantothenate synthetase from Pseudomonas putida (strain W619).